The sequence spans 944 residues: Autophagy-related protein 9 (944 aa).

Over 1 to 235 (MASNLISRLL…DLYAYFEGAG (235 aa)) the chain is Cytoplasmic. Polar residues predominate over residues 70 to 86 (ESTAFLSDQQQTPQKQG). Disordered stretches follow at residues 70–113 (ESTA…DSDD) and 142–199 (ALPK…QNTG). Positions 87-97 (YNRKGKGKGRS) are enriched in basic residues. Residues 158-181 (IKEERDRAHWEMTQEQQKLHEDGG) show a composition bias toward basic and acidic residues. Residues 190–199 (TPQSIPQNTG) are compositionally biased toward polar residues. The chain crosses the membrane as a helical span at residues 236–256 (IWCIVLAKVIDILTLVFVAVF). The Lumenal portion of the chain corresponds to 257-294 (TTFLTQCVDYKKIYRGDARSLEYALVPQCTKKISGMSN). A helical membrane pass occupies residues 295-315 (VAIWLVCLFVLYRVYQLLTDL). Residues 316–462 (PRLMKMRDFF…RELSDGLRNR (147 aa)) are Cytoplasmic-facing. Residues 463 to 483 (FLFAGLMNVICAPVIVIYVVI) lie within the membrane without spanning it. Residues 484–549 (VYFFKYFNQY…QFPNVKTAHM (66 aa)) are Cytoplasmic-facing. The helical transmembrane segment at 550 to 570 (AKFITFMAGAVVSVLVVATVW) threads the bilayer. Topologically, residues 571–584 (DSEVLAGFDITSER) are lumenal. The helical transmembrane segment at 585 to 605 (PVLFYIGVFGSLWAITNGMIP) threads the bilayer. Over 606 to 651 (EENEVFDPEYALRQVIEYTHYMPNHWQDRLHSDEVKREFSTLYQLK) the chain is Cytoplasmic. Residues 652–672 (LMIFIEEVFSIIITPFLLWFS) lie within the membrane without spanning it. Over 673-944 (LPKCADQIID…TNGRPGVSIW (272 aa)) the chain is Cytoplasmic. Disordered regions lie at residues 753-881 (VPGH…QPGR) and 894-922 (ESTW…GGAG). Polar residues-rich tracts occupy residues 776–789 (SSPT…SSRM) and 813–823 (FPSNTTATGSP). Over residues 844 to 855 (SVRRSSRSRYQA) the composition is skewed to basic residues. The segment covering 907–916 (DGQDEEEDGD) has biased composition (acidic residues).

Belongs to the ATG9 family. As to quaternary structure, homotrimer; forms a homotrimer with a central pore that forms a path between the two membrane leaflets. In terms of processing, phosphorylated by atg1. Atg1 phosphorylation is required for preautophagosome elongation.

The protein localises to the preautophagosomal structure membrane. It is found in the cytoplasmic vesicle membrane. The protein resides in the golgi apparatus membrane. It localises to the endoplasmic reticulum membrane. It catalyses the reaction a 1,2-diacyl-sn-glycero-3-phosphocholine(in) = a 1,2-diacyl-sn-glycero-3-phosphocholine(out). The catalysed reaction is a 1,2-diacyl-sn-glycero-3-phospho-L-serine(in) = a 1,2-diacyl-sn-glycero-3-phospho-L-serine(out). It carries out the reaction a 1,2-diacyl-sn-glycero-3-phosphoethanolamine(in) = a 1,2-diacyl-sn-glycero-3-phosphoethanolamine(out). The enzyme catalyses a 1,2-diacyl-sn-glycero-3-phospho-(1D-myo-inositol-3-phosphate)(in) = a 1,2-diacyl-sn-glycero-3-phospho-(1D-myo-inositol-3-phosphate)(out). Phospholipid scramblase involved in autophagy and cytoplasm to vacuole transport (Cvt) vesicle formation. Cycles between the preautophagosomal structure/phagophore assembly site (PAS) and the cytoplasmic vesicle pool and supplies membrane for the growing autophagosome. Lipid scramblase activity plays a key role in preautophagosomal structure/phagophore assembly by distributing the phospholipids that arrive through atg2 from the cytoplasmic to the luminal leaflet of the bilayer, thereby driving autophagosomal membrane expansion. Required for mitophagy. Also involved in endoplasmic reticulum-specific autophagic process and is essential for the survival of cells subjected to severe ER stress. Different machineries are required for anterograde trafficking to the PAS during either the Cvt pathway or bulk autophagy and for retrograde trafficking. The chain is Autophagy-related protein 9 (atg9) from Sclerotinia sclerotiorum (strain ATCC 18683 / 1980 / Ss-1) (White mold).